We begin with the raw amino-acid sequence, 251 residues long: tRNA pseudouridine synthase A (251 aa).

The active-site Nucleophile is the D56. Y110 serves as a coordination point for substrate.

The protein belongs to the tRNA pseudouridine synthase TruA family.

It catalyses the reaction uridine(38/39/40) in tRNA = pseudouridine(38/39/40) in tRNA. Formation of pseudouridine at positions 38, 39 and 40 in the anticodon stem and loop of transfer RNAs. This is tRNA pseudouridine synthase A from Picrophilus torridus (strain ATCC 700027 / DSM 9790 / JCM 10055 / NBRC 100828 / KAW 2/3).